Consider the following 137-residue polypeptide: Insulin-like peptide 2 (137 aa).

A signal peptide spans methionine 1–glycine 26. Disulfide bonds link cysteine 29/cysteine 119, cysteine 41/cysteine 132, and cysteine 118/cysteine 123. Residues alanine 53–valine 104 constitute a propeptide, connecting peptide.

Belongs to the insulin family. Heterodimer of a B chain and an A chain linked by two disulfide bonds. As to expression, broadly expressed at a low level in the embryonic mesoderm, beginning at stage 12. Expressed at a high level in the embryonic anterior midgut, with expression diminishing at late stage 16. Expressed at a low level in larval imaginal disks. Expressed at a high level in larval salivary glands and in seven cells of each larval brain hemisphere that may correspond to neurosecretory cells.

The protein resides in the secreted. Its function is as follows. Possible ligand of InR/insulin-like receptor. Functionally, plays a role in regulating body size by increasing cell size and cell number of individual organs. Probably mediates its growth effects by acting as a ligand for the insulin receptor and transducing a signal via the Chico/PI3K/Akt(PKB) pathway. The chain is Insulin-like peptide 2 from Drosophila melanogaster (Fruit fly).